Reading from the N-terminus, the 154-residue chain is Crossover junction endodeoxyribonuclease RuvC (154 aa).

Catalysis depends on residues Asp7, Glu66, and Asp139. 3 residues coordinate Mg(2+): Asp7, Glu66, and Asp139.

Belongs to the RuvC family. In terms of assembly, homodimer which binds Holliday junction (HJ) DNA. The HJ becomes 2-fold symmetrical on binding to RuvC with unstacked arms; it has a different conformation from HJ DNA in complex with RuvA. In the full resolvosome a probable DNA-RuvA(4)-RuvB(12)-RuvC(2) complex forms which resolves the HJ. Mg(2+) serves as cofactor.

The protein localises to the cytoplasm. The catalysed reaction is Endonucleolytic cleavage at a junction such as a reciprocal single-stranded crossover between two homologous DNA duplexes (Holliday junction).. Its function is as follows. The RuvA-RuvB-RuvC complex processes Holliday junction (HJ) DNA during genetic recombination and DNA repair. Endonuclease that resolves HJ intermediates. Cleaves cruciform DNA by making single-stranded nicks across the HJ at symmetrical positions within the homologous arms, yielding a 5'-phosphate and a 3'-hydroxyl group; requires a central core of homology in the junction. The consensus cleavage sequence is 5'-(A/T)TT(C/G)-3'. Cleavage occurs on the 3'-side of the TT dinucleotide at the point of strand exchange. HJ branch migration catalyzed by RuvA-RuvB allows RuvC to scan DNA until it finds its consensus sequence, where it cleaves and resolves the cruciform DNA. The protein is Crossover junction endodeoxyribonuclease RuvC of Aliarcobacter butzleri (strain RM4018) (Arcobacter butzleri).